Here is a 142-residue protein sequence, read N- to C-terminus: Large ribosomal subunit protein uL13 (142 aa).

Belongs to the universal ribosomal protein uL13 family. As to quaternary structure, part of the 50S ribosomal subunit.

In terms of biological role, this protein is one of the early assembly proteins of the 50S ribosomal subunit, although it is not seen to bind rRNA by itself. It is important during the early stages of 50S assembly. The polypeptide is Large ribosomal subunit protein uL13 (Alcanivorax borkumensis (strain ATCC 700651 / DSM 11573 / NCIMB 13689 / SK2)).